The sequence spans 356 residues: Nicotinate-nucleotide--dimethylbenzimidazole phosphoribosyltransferase (356 aa).

The active-site Proton acceptor is the Glu317.

Belongs to the CobT family. In terms of assembly, homodimer.

It catalyses the reaction 5,6-dimethylbenzimidazole + nicotinate beta-D-ribonucleotide = alpha-ribazole 5'-phosphate + nicotinate + H(+). It participates in nucleoside biosynthesis; alpha-ribazole biosynthesis; alpha-ribazole from 5,6-dimethylbenzimidazole: step 1/2. Functionally, catalyzes the synthesis of alpha-ribazole-5'-phosphate from nicotinate mononucleotide (NAMN) and 5,6-dimethylbenzimidazole (DMB). This is Nicotinate-nucleotide--dimethylbenzimidazole phosphoribosyltransferase from Salmonella typhi.